A 190-amino-acid polypeptide reads, in one-letter code: Large ribosomal subunit protein uL5 (190 aa).

It belongs to the universal ribosomal protein uL5 family. As to quaternary structure, part of the 50S ribosomal subunit; part of the 5S rRNA/L5/L18/L25 subcomplex. Contacts the 5S rRNA and the P site tRNA. Forms a bridge to the 30S subunit in the 70S ribosome.

This is one of the proteins that bind and probably mediate the attachment of the 5S RNA into the large ribosomal subunit, where it forms part of the central protuberance. In the 70S ribosome it contacts protein S13 of the 30S subunit (bridge B1b), connecting the 2 subunits; this bridge is implicated in subunit movement. Contacts the P site tRNA; the 5S rRNA and some of its associated proteins might help stabilize positioning of ribosome-bound tRNAs. The sequence is that of Large ribosomal subunit protein uL5 from Corynebacterium efficiens (strain DSM 44549 / YS-314 / AJ 12310 / JCM 11189 / NBRC 100395).